We begin with the raw amino-acid sequence, 177 residues long: Protein-export protein SecB (177 aa).

The segment at 1–22 is disordered; the sequence is MSDENNSGAAAPEAQNPGQNAA. The span at 8-22 shows a compositional bias: low complexity; that stretch reads GAAAPEAQNPGQNAA.

It belongs to the SecB family. As to quaternary structure, homotetramer, a dimer of dimers. One homotetramer interacts with 1 SecA dimer.

Its subcellular location is the cytoplasm. One of the proteins required for the normal export of preproteins out of the cell cytoplasm. It is a molecular chaperone that binds to a subset of precursor proteins, maintaining them in a translocation-competent state. It also specifically binds to its receptor SecA. This is Protein-export protein SecB from Paracoccus denitrificans (strain Pd 1222).